The chain runs to 858 residues: Ubiquitin carboxyl-terminal hydrolase 5 (858 aa).

Position 2 is an N-acetylalanine (alanine 2). Residues 73-98 (LRRTRRPKEEDTSAGTGDPPRKKPTR) form a disordered region. Residue lysine 113 forms a Glycyl lysine isopeptide (Lys-Gly) (interchain with G-Cter in SUMO) linkage. Residues serine 149 and serine 156 each carry the phosphoserine modification. The UBP-type; degenerate zinc finger occupies 175-283 (QVSKHAFNLK…EHLSHFGIDM (109 aa)). Cysteine 195 and cysteine 816 are oxidised to a cystine. Zn(2+) is bound by residues cysteine 199 and cysteine 202. Tryptophan 209 contributes to the substrate binding site. Residue cysteine 219 participates in Zn(2+) binding. 221–224 (RRYF) lines the substrate pocket. Histidine 232 lines the Zn(2+) pocket. Positions 259, 261, and 264 each coordinate substrate. Position 292 is a phosphothreonine (threonine 292). The USP domain maps to 326–856 (TGIRNLGNSC…LGYIYFYQRV (531 aa)). The Nucleophile role is filled by cysteine 335. Threonine 623 bears the Phosphothreonine mark. UBA domains are found at residues 654 to 695 (MLDE…VMSH) and 722 to 762 (PPPE…IFSH). A phosphoserine mark is found at serine 779, serine 783, and serine 785. Histidine 818 serves as the catalytic Proton acceptor.

This sequence belongs to the peptidase C19 family. Homodimer. Interacts with TRIML1. SUMOylated at Lys-113; SUMOylation affects the interaction with Cav3.2 channels. Post-translationally, ubiquitinated by SMURF1; leading to proteasomal degradation.

The protein resides in the cytoplasm. The protein localises to the stress granule. It is found in the nucleus. The enzyme catalyses Thiol-dependent hydrolysis of ester, thioester, amide, peptide and isopeptide bonds formed by the C-terminal Gly of ubiquitin (a 76-residue protein attached to proteins as an intracellular targeting signal).. In terms of biological role, deubiquitinating enzyme that participates in a wide range of cellular processes by specifically cleaving isopeptide bonds between ubiquitin and substrate proteins or ubiquitin itself. Affects thereby important cellular signaling pathways such as NF-kappa-B, Wnt/beta-catenin, and cytokine production by regulating ubiquitin-dependent protein degradation. Participates in the activation of the Wnt signaling pathway by promoting FOXM1 deubiquitination and stabilization that induces the recruitment of beta-catenin to Wnt target gene promoter. Regulates the assembly and disassembly of heat-induced stress granules by mediating the hydrolysis of unanchored ubiquitin chains. Promotes lipopolysaccharide-induced apoptosis and inflammatory response by stabilizing the TXNIP protein. Affects T-cell biology by stabilizing the inhibitory receptor on T-cells PDC1. Acts as a negative regulator of autophagy by regulating ULK1 at both protein and mRNA levels. Acts also as a negative regulator of type I interferon production by simultaneously removing both 'Lys-48'-linked unanchored and 'Lys-63'-linked anchored polyubiquitin chains on the transcription factor IRF3. Modulates the stability of DNA mismatch repair protein MLH1 and counteracts the effect of the ubiquitin ligase UBR4. Upon activation by insulin, it gets phosphorylated through mTORC1-mediated phosphorylation to enhance YTHDF1 stability by removing 'Lys-11'-linked polyubiquitination. May also deubiquitinate other substrates such as the calcium channel CACNA1H. The chain is Ubiquitin carboxyl-terminal hydrolase 5 (Usp5) from Mus musculus (Mouse).